We begin with the raw amino-acid sequence, 391 residues long: Probable sugar efflux transporter (391 aa).

Transmembrane regions (helical) follow at residues 16–36, 51–71, 82–102, 103–123, 138–158, 170–190, 210–230, 247–267, 277–297, 300–320, 338–358, and 361–381; these read VFVF…PIAL, VGLM…PLML, LLFL…AWDF, WVLL…WSIT, QALG…LPLG, TFGM…RLLP, PLLV…FTTY, VATL…FLFG, FIAC…SFKH, WVIF…GISL, IFSG…SIVI, and LGLG…LFWF.

This sequence belongs to the major facilitator superfamily. SotB (TC 2.A.1.2) family.

The protein resides in the cell inner membrane. In terms of biological role, involved in the efflux of sugars. The physiological role may be the reduction of the intracellular concentration of toxic sugars or sugar metabolites. This Helicobacter acinonychis (strain Sheeba) protein is Probable sugar efflux transporter.